Reading from the N-terminus, the 463-residue chain is L-seryl-tRNA(Sec) selenium transferase (463 aa).

K295 is modified (N6-(pyridoxal phosphate)lysine).

Belongs to the SelA family. In terms of assembly, homodecamer; pentamer of dimers. Binds only one seryl-tRNA(Sec) per dimer. The cofactor is pyridoxal 5'-phosphate.

Its subcellular location is the cytoplasm. The catalysed reaction is L-seryl-tRNA(Sec) + selenophosphate + H(+) = L-selenocysteinyl-tRNA(Sec) + phosphate. It functions in the pathway aminoacyl-tRNA biosynthesis; selenocysteinyl-tRNA(Sec) biosynthesis; selenocysteinyl-tRNA(Sec) from L-seryl-tRNA(Sec) (bacterial route): step 1/1. In terms of biological role, converts seryl-tRNA(Sec) to selenocysteinyl-tRNA(Sec) required for selenoprotein biosynthesis. This Salmonella enteritidis PT4 (strain P125109) protein is L-seryl-tRNA(Sec) selenium transferase.